The chain runs to 120 residues: Xibalbin-1 (120 aa).

An N-terminal signal peptide occupies residues 1-21 (MISKILIAACALLLISHLVLA). The propeptide occupies 22–63 (VPYLEDGLNSLHNRTGESDETRGYTIQLLKEMPEDDAVEDYS). Cystine bridges form between Cys79/Cys94, Cys86/Cys99, Cys93/Cys110, and Cys101/Cys108.

The protein belongs to the xibalbin-1 family. As to expression, expressed by the venom gland. Not found in the whole body.

The protein localises to the secreted. Its function is as follows. Probable neurotoxin. Strongly inhibits voltage-gated potassium channels (Kv1.1/KCNA1, Kv1.2/KCNA2, Kv1.3/KCNA3, and Kv1.6/KCNA6, with the highest toxicity against Kv1.6 (74% inhibition at 1 uM)) and mildly inhibits sodium channels (Nav1.2/SCN2A, Nav1.4/SCN4A, Nav1.5/SCN5A, Nav1.6/SCN8A, and BgNav). Induces activation of protein kinase A type II (PKA-II) and MAP kinase Erk1/2 in primary nociceptive and non-nociceptive sensory neurons. Does not show cytotoxic activity. Does not have an impact on Ca2+, cAMP, and NO signaling in the cell types analyzed. Does not interfere with the adhesion of leukocytes to endothelial cells. The polypeptide is Xibalbin-1 (Xibalbanus tulumensis (Blind cave remipede)).